The chain runs to 132 residues: UPF0299 membrane protein YohJ (132 aa).

4 helical membrane passes run 8 to 28, 31 to 51, 63 to 83, and 93 to 113; these read IWQY…GIFI, LLPV…VLLA, GCYL…VGVM, and FGPV…VVSW.

Belongs to the UPF0299 family.

The protein localises to the cell inner membrane. The polypeptide is UPF0299 membrane protein YohJ (Escherichia fergusonii (strain ATCC 35469 / DSM 13698 / CCUG 18766 / IAM 14443 / JCM 21226 / LMG 7866 / NBRC 102419 / NCTC 12128 / CDC 0568-73)).